Reading from the N-terminus, the 393-residue chain is Protein FAM47E (393 aa).

Residues 326-354 (VSHKAQEENFKKELQEQEELLADLHGTVA) are a coiled coil.

The protein belongs to the FAM47 family. In terms of assembly, interacts with PRMT5; the interaction is direct. Interacts with WDR77.

It localises to the nucleus. The protein resides in the chromosome. Its subcellular location is the cytoplasm. Functionally, promotes histone methylation by localizing the arginine methyltransferase PRMT5 to chromatin. In Homo sapiens (Human), this protein is Protein FAM47E (FAM47E).